Consider the following 419-residue polypeptide: UDP-N-acetylglucosamine 1-carboxyvinyltransferase (419 aa).

22-23 lines the phosphoenolpyruvate pocket; sequence KN. Arginine 92 lines the UDP-N-acetyl-alpha-D-glucosamine pocket. Cysteine 116 functions as the Proton donor in the catalytic mechanism. Residue cysteine 116 is modified to 2-(S-cysteinyl)pyruvic acid O-phosphothioketal. UDP-N-acetyl-alpha-D-glucosamine is bound by residues aspartate 306 and isoleucine 328.

Belongs to the EPSP synthase family. MurA subfamily.

The protein localises to the cytoplasm. The catalysed reaction is phosphoenolpyruvate + UDP-N-acetyl-alpha-D-glucosamine = UDP-N-acetyl-3-O-(1-carboxyvinyl)-alpha-D-glucosamine + phosphate. It functions in the pathway cell wall biogenesis; peptidoglycan biosynthesis. Cell wall formation. Adds enolpyruvyl to UDP-N-acetylglucosamine. This is UDP-N-acetylglucosamine 1-carboxyvinyltransferase from Psychromonas ingrahamii (strain DSM 17664 / CCUG 51855 / 37).